A 212-amino-acid polypeptide reads, in one-letter code: GTP cyclohydrolase 1 (212 aa).

Positions 103, 106, and 174 each coordinate Zn(2+).

The protein belongs to the GTP cyclohydrolase I family. As to quaternary structure, toroid-shaped homodecamer, composed of two pentamers of five dimers.

The enzyme catalyses GTP + H2O = 7,8-dihydroneopterin 3'-triphosphate + formate + H(+). It functions in the pathway cofactor biosynthesis; 7,8-dihydroneopterin triphosphate biosynthesis; 7,8-dihydroneopterin triphosphate from GTP: step 1/1. This Caulobacter vibrioides (strain ATCC 19089 / CIP 103742 / CB 15) (Caulobacter crescentus) protein is GTP cyclohydrolase 1.